The chain runs to 338 residues: Heat shock factor 2-binding protein (338 aa).

Residues 1–20 form a disordered region; that stretch reads MAATVGDGSGTEEACRNMES. The stretch at 12 to 126 forms a coiled coil; it reads EEACRNMESK…LLQQAEYCTQ (115 aa). Residues 18–55 are interaction with BRME1; that stretch reads MESKEEFVKVRKKDLERLTTEVMQIRDFLPRILNGELL. The interaction with BRCA2 stretch occupies residues 87–338; it reads ARLETAQADS…EDLRALDCNV (252 aa).

In terms of assembly, interacts (via C-terminus) with BNC1. Associates with HSF2. The interaction seems to occur between the trimerization domain of HSF2 and the N-terminal hydrophilic region of HSF2BP. Interacts (via N-terminus) with BRME1. Interacts with BRCA2 and BRME1; the interactions are direct and allow the formation of a ternary complex. The complex BRME1:HSF2BP:BRCA2 interacts with SPATA22, MEIOB and RAD51. Post-translationally, sumoylated by UBE2I in response to MEKK1-mediated stimuli. In terms of tissue distribution, expressed in testis and, to a lesser extent, in lung and muscle.

The protein localises to the cytoplasm. Its subcellular location is the chromosome. In terms of biological role, meiotic recombination factor component of recombination bridges involved in meiotic double-strand break repair. Modulates the localization of recombinases DMC1:RAD51 to meiotic double-strand break (DSB) sites through the interaction with BRCA2 and its recruitment during meiotic recombination. Indispensable for the DSB repair, homologous synapsis, and crossover formation that are needed for progression past metaphase I, is essential for spermatogenesis and male fertility. Required for proper recombinase recruitment in female meiosis. Inhibits BNC1 transcriptional activity during spermatogenesis, probably by sequestering it in the cytoplasm. May be involved in modulating HSF2 activation in testis. This is Heat shock factor 2-binding protein from Mus musculus (Mouse).